Here is a 687-residue protein sequence, read N- to C-terminus: Translation initiation factor IF-2 (687 aa).

Residues lysine 186–lysine 355 form the tr-type G domain. The tract at residues glycine 195 to threonine 202 is G1. Residue glycine 195–threonine 202 coordinates GTP. The interval glycine 220–histidine 224 is G2. Residues aspartate 241–glycine 244 are G3. GTP contacts are provided by residues aspartate 241–histidine 245 and asparagine 295–aspartate 298. Residues asparagine 295 to aspartate 298 are G4. Residues serine 331 to lysine 333 form a G5 region.

Belongs to the TRAFAC class translation factor GTPase superfamily. Classic translation factor GTPase family. IF-2 subfamily.

The protein resides in the cytoplasm. Its function is as follows. One of the essential components for the initiation of protein synthesis. Protects formylmethionyl-tRNA from spontaneous hydrolysis and promotes its binding to the 30S ribosomal subunits. Also involved in the hydrolysis of GTP during the formation of the 70S ribosomal complex. This chain is Translation initiation factor IF-2, found in Clostridium botulinum (strain Eklund 17B / Type B).